The primary structure comprises 203 residues: MKLRWLLILVVFLAGCSSKHDYTNPPWNPEVPVKRAMQWMPISEKAGAAWGVDPQLITAIIAIESGGNPAVVSKSGAVGLMQLKPSTSGRDVYRRMGWRGEPSVSELKNPERNISMGAAYLSILENGPLAGIKDPQVMRYAVVVSYANGAGALLRTFSSNRQDAIEEINDLDADEFFEHVVKKHPAPQAPRYIWKLQKALDAM.

The N-terminal stretch at Met1–Gly15 is a signal peptide. Cys16 carries N-palmitoyl cysteine lipidation. The S-diacylglycerol cysteine moiety is linked to residue Cys16.

This sequence belongs to the transglycosylase Slt family.

Its subcellular location is the cell outer membrane. The enzyme catalyses Endolytic cleavage of the (1-&gt;4)-beta-glycosidic linkage between N-acetylmuramic acid (MurNAc) and N-acetylglucosamine (GlcNAc) residues in peptidoglycan with concomitant formation of a 1,6-anhydrobond in the MurNAc residue.. Murein-degrading enzyme. May play a role in recycling of muropeptides during cell elongation and/or cell division. Preferentially cleaves at a distance of more than two disaccharide units from the ends of the glycan chain. In Klebsiella pneumoniae subsp. pneumoniae (strain ATCC 700721 / MGH 78578), this protein is Endo-type membrane-bound lytic murein transglycosylase A.